The primary structure comprises 348 residues: AT-hook motif nuclear-localized protein 9 (348 aa).

The interval histidine 18 to serine 156 is disordered. The span at glycine 31–asparagine 46 shows a compositional bias: polar residues. Residues serine 47–serine 60 are compositionally biased toward low complexity. Positions lysine 98 to lysine 106 match the Bipartite nuclear localization signal motif. A DNA-binding region (a.T hook 1) is located at residues lysine 98–aspartate 110. Residues serine 112–asparagine 131 show a composition bias toward low complexity. The segment at residues lysine 132–lysine 144 is a DNA-binding region (a.T hook 2). Positions serine 157–glutamate 299 constitute a PPC domain.

It is found in the nucleus. Its function is as follows. Transcription factor that specifically binds AT-rich DNA sequences related to the nuclear matrix attachment regions (MARs). The sequence is that of AT-hook motif nuclear-localized protein 9 from Arabidopsis thaliana (Mouse-ear cress).